The chain runs to 729 residues: 1,4-alpha-glucan branching enzyme GlgB (729 aa).

Asp407 (nucleophile) is an active-site residue. The active-site Proton donor is the Glu460.

Belongs to the glycosyl hydrolase 13 family. GlgB subfamily. In terms of assembly, monomer.

The catalysed reaction is Transfers a segment of a (1-&gt;4)-alpha-D-glucan chain to a primary hydroxy group in a similar glucan chain.. It functions in the pathway glycan biosynthesis; glycogen biosynthesis. Functionally, catalyzes the formation of the alpha-1,6-glucosidic linkages in glycogen by scission of a 1,4-alpha-linked oligosaccharide from growing alpha-1,4-glucan chains and the subsequent attachment of the oligosaccharide to the alpha-1,6 position. This chain is 1,4-alpha-glucan branching enzyme GlgB, found in Pseudoalteromonas atlantica (strain T6c / ATCC BAA-1087).